A 488-amino-acid polypeptide reads, in one-letter code: Tripartite motif-containing protein 6 (488 aa).

The RING-type zinc finger occupies cysteine 15–arginine 60. The segment at leucine 92–methionine 133 adopts a B box-type zinc-finger fold. Zn(2+) is bound by residues cysteine 97, histidine 100, cysteine 119, and histidine 125. Residues leucine 132–leucine 223 adopt a coiled-coil conformation. The B30.2/SPRY domain maps to aspartate 282–serine 488.

This sequence belongs to the TRIM/RBCC family. Homotrimer. Forms heteromultimers (via B30.2/SPRY domain) with TRIM5. Interacts with MYC. Interacts (via SPRY domain) with IKBKE. Interacts with VAMP8; this interaction contributes to the activation of the type I interferon antiviral response. Interacts with DHX16.

It localises to the cytoplasm. The catalysed reaction is S-ubiquitinyl-[E2 ubiquitin-conjugating enzyme]-L-cysteine + [acceptor protein]-L-lysine = [E2 ubiquitin-conjugating enzyme]-L-cysteine + N(6)-ubiquitinyl-[acceptor protein]-L-lysine.. Its pathway is protein modification; protein ubiquitination. Its function is as follows. E3 ubiquitin ligase that plays a crucial role in the activation of the IKBKE-dependent branch of the type I interferon signaling pathway. In concert with the ubiquitin-conjugating E2 enzyme UBE2K, synthesizes unanchored 'Lys-48'-linked polyubiquitin chains that promote the oligomerization and autophosphorylation of IKBKE leading to stimulation of an antiviral response. Also ubiquitinates MYC and inhibits its transcription activation activity, maintaining the pluripotency of embryonic stem cells. Promotes the association of unanchored 'Lys-48'-polyubiquitin chains with DHX16 leading to enhancement of RIGI-mediated innate antiviral immune response. This Mus musculus (Mouse) protein is Tripartite motif-containing protein 6 (Trim6).